The following is a 443-amino-acid chain: Regulator of rDNA transcription protein 5 (443 aa).

Residues 4–87 form the RRM 1 domain; the sequence is SRIYIANVSY…RVLRVRTHNP (84 aa). Residues 112-140 are disordered; it reads EDTAASGERAPTDAQDHPDQPQEGHMSPD. The span at 121–133 shows a compositional bias: basic and acidic residues; that stretch reads APTDAQDHPDQPQ. The RRM 2 domain occupies 183–268; the sequence is DTVYCAFLPK…TKISIKPAYI (86 aa). A disordered region spans residues 408-443; that stretch reads GMTKQSVGSNKKKNKKKKSARGKEVRKLSVSNTTTQ. A compositionally biased stretch (basic residues) spans 417–427; sequence NKKKNKKKKSA.

The protein belongs to the RRT5 family.

In terms of biological role, may be involved in the modulation of rDNA transcription. The chain is Regulator of rDNA transcription protein 5 (RRT5) from Candida glabrata (strain ATCC 2001 / BCRC 20586 / JCM 3761 / NBRC 0622 / NRRL Y-65 / CBS 138) (Yeast).